We begin with the raw amino-acid sequence, 502 residues long: Lysine--tRNA ligase (502 aa).

The Mg(2+) site is built by glutamate 399 and glutamate 406.

This sequence belongs to the class-II aminoacyl-tRNA synthetase family. Homodimer. Mg(2+) is required as a cofactor.

Its subcellular location is the cytoplasm. It catalyses the reaction tRNA(Lys) + L-lysine + ATP = L-lysyl-tRNA(Lys) + AMP + diphosphate. This chain is Lysine--tRNA ligase, found in Synechococcus sp. (strain RCC307).